The following is a 345-amino-acid chain: Uroporphyrinogen decarboxylase (345 aa).

Substrate contacts are provided by residues 28-32 (RQAGR), Asp77, Tyr152, Ser207, and His321.

The protein belongs to the uroporphyrinogen decarboxylase family. Homodimer.

It localises to the cytoplasm. It catalyses the reaction uroporphyrinogen III + 4 H(+) = coproporphyrinogen III + 4 CO2. It participates in porphyrin-containing compound metabolism; protoporphyrin-IX biosynthesis; coproporphyrinogen-III from 5-aminolevulinate: step 4/4. Functionally, catalyzes the decarboxylation of four acetate groups of uroporphyrinogen-III to yield coproporphyrinogen-III. This chain is Uroporphyrinogen decarboxylase, found in Arthrobacter sp. (strain FB24).